A 205-amino-acid polypeptide reads, in one-letter code: Putative 3-methyladenine DNA glycosylase (205 aa).

This sequence belongs to the DNA glycosylase MPG family.

This Clostridium perfringens (strain 13 / Type A) protein is Putative 3-methyladenine DNA glycosylase.